A 156-amino-acid chain; its full sequence is RNA polymerase sigma factor SigS (156 aa).

The Polymerase core binding signature appears at 29–44; sequence EYYQLLLIKMWQLSQI. Positions 126–145 form a DNA-binding region, H-T-H motif; sequence QFEIAEIMSLSLSTIKLIKM.

The protein belongs to the sigma-70 factor family.

Sigma factors are initiation factors that promote the attachment of RNA polymerase to specific initiation sites and are then released. Sigma-S contributes to the protection against external stress, thus playing a role in cellular fitness and survival. The chain is RNA polymerase sigma factor SigS (sigS) from Staphylococcus aureus (strain NCTC 8325 / PS 47).